A 510-amino-acid polypeptide reads, in one-letter code: NAD(P)H-quinone oxidoreductase subunit 2 B, chloroplastic (510 aa).

The next 13 membrane-spanning stretches (helical) occupy residues Leu24–Leu44, Ile57–Phe77, Ile99–Ile119, Met124–Cys144, Leu149–Tyr169, Tyr183–Gly203, Pro227–Ala247, Trp295–Ile315, Met323–Asp343, Tyr354–Leu374, Ala395–Phe415, Leu418–Leu438, and Leu482–Ile502.

It belongs to the complex I subunit 2 family. In terms of assembly, NDH is composed of at least 16 different subunits, 5 of which are encoded in the nucleus.

It is found in the plastid. It localises to the chloroplast thylakoid membrane. It catalyses the reaction a plastoquinone + NADH + (n+1) H(+)(in) = a plastoquinol + NAD(+) + n H(+)(out). The enzyme catalyses a plastoquinone + NADPH + (n+1) H(+)(in) = a plastoquinol + NADP(+) + n H(+)(out). Functionally, NDH shuttles electrons from NAD(P)H:plastoquinone, via FMN and iron-sulfur (Fe-S) centers, to quinones in the photosynthetic chain and possibly in a chloroplast respiratory chain. The immediate electron acceptor for the enzyme in this species is believed to be plastoquinone. Couples the redox reaction to proton translocation, and thus conserves the redox energy in a proton gradient. This chain is NAD(P)H-quinone oxidoreductase subunit 2 B, chloroplastic, found in Lotus japonicus (Lotus corniculatus var. japonicus).